Reading from the N-terminus, the 358-residue chain is DNA replication and repair protein RecF (358 aa).

30–37 provides a ligand contact to ATP; sequence GNNGSGKT.

It belongs to the RecF family.

It is found in the cytoplasm. Its function is as follows. The RecF protein is involved in DNA metabolism; it is required for DNA replication and normal SOS inducibility. RecF binds preferentially to single-stranded, linear DNA. It also seems to bind ATP. The sequence is that of DNA replication and repair protein RecF from Histophilus somni (strain 129Pt) (Haemophilus somnus).